The sequence spans 428 residues: 3-phosphoshikimate 1-carboxyvinyltransferase (428 aa).

3-phosphoshikimate-binding residues include K22, S23, and R27. Residue K22 participates in phosphoenolpyruvate binding. Residues G96 and R124 each contribute to the phosphoenolpyruvate site. S170, S171, Q172, S198, D314, N337, and K341 together coordinate 3-phosphoshikimate. Q172 contacts phosphoenolpyruvate. Residue D314 is the Proton acceptor of the active site. R345, R387, and K412 together coordinate phosphoenolpyruvate.

It belongs to the EPSP synthase family. In terms of assembly, monomer.

It is found in the cytoplasm. It catalyses the reaction 3-phosphoshikimate + phosphoenolpyruvate = 5-O-(1-carboxyvinyl)-3-phosphoshikimate + phosphate. It participates in metabolic intermediate biosynthesis; chorismate biosynthesis; chorismate from D-erythrose 4-phosphate and phosphoenolpyruvate: step 6/7. Functionally, catalyzes the transfer of the enolpyruvyl moiety of phosphoenolpyruvate (PEP) to the 5-hydroxyl of shikimate-3-phosphate (S3P) to produce enolpyruvyl shikimate-3-phosphate and inorganic phosphate. This Vibrio vulnificus (strain YJ016) protein is 3-phosphoshikimate 1-carboxyvinyltransferase.